Here is a 467-residue protein sequence, read N- to C-terminus: tRNA modification GTPase MnmE (467 aa).

(6S)-5-formyl-5,6,7,8-tetrahydrofolate contacts are provided by Arg-25, Glu-87, and Lys-130. Residues 226–389 form the TrmE-type G domain; the sequence is GLSVVLAGQP…LRGELLRIAG (164 aa). A K(+)-binding site is contributed by Asn-236. GTP-binding positions include 236-241, 255-261, and 280-283; these read NVGKSS, TPIAGTT, and DTAG. Residue Ser-240 participates in Mg(2+) binding. Positions 255, 257, and 260 each coordinate K(+). Thr-261 contacts Mg(2+). A (6S)-5-formyl-5,6,7,8-tetrahydrofolate-binding site is contributed by Lys-467.

This sequence belongs to the TRAFAC class TrmE-Era-EngA-EngB-Septin-like GTPase superfamily. TrmE GTPase family. In terms of assembly, homodimer. Heterotetramer of two MnmE and two MnmG subunits. Requires K(+) as cofactor.

The protein localises to the cytoplasm. In terms of biological role, exhibits a very high intrinsic GTPase hydrolysis rate. Involved in the addition of a carboxymethylaminomethyl (cmnm) group at the wobble position (U34) of certain tRNAs, forming tRNA-cmnm(5)s(2)U34. This chain is tRNA modification GTPase MnmE, found in Burkholderia thailandensis (strain ATCC 700388 / DSM 13276 / CCUG 48851 / CIP 106301 / E264).